Consider the following 1205-residue polypeptide: Centrosome and spindle pole associated protein 1 (1205 aa).

2 coiled-coil regions span residues 12 to 34 and 87 to 108; these read QKAK…EMKG and KLKE…TQAK. The segment at 16 to 37 is disordered; sequence LAKDKAELESDPPYMEMKGKAS. Residues 158-173 are compositionally biased toward basic and acidic residues; the sequence is STEKVRQVEKNIEPKS. Disordered regions lie at residues 158-187, 222-277, and 380-467; these read STEK…KSDL, SRRP…PGVS, and QQKK…GSTL. Polar residues predominate over residues 176–187; it reads NKNPISQGKSDL. Basic and acidic residues-rich tracts occupy residues 222–233 and 257–275; these read SRRPLKQTKEEV and ANGE…RDPG. Residues 357–391 adopt a coiled-coil conformation; it reads EDRELTKRRKEKYRQELLEQIAEQQKKKRREKDLA. 2 stretches are compositionally biased toward basic and acidic residues: residues 401–410 and 417–428; these read DPEKSPDRLK and RHFEEMPPERPR. Position 405 is a phosphoserine (Ser405). The segment covering 433 to 447 has biased composition (pro residues); sequence TPPPPFSAPSSPSVP. Residues 574 to 618 are a coiled coil; it reads STQSLQSYQEALQEQIREREARRKKERLEKEEYEAKLEAEMRIYN. Positions 677–704 are disordered; it reads AENLEDSANKNSGPLQTQSSPFARGNTF. Positions 685–697 are enriched in polar residues; it reads NKNSGPLQTQSSP. A coiled-coil region spans residues 724 to 813; that stretch reads RFQIEEKRQR…EKHNLQLQHY (90 aa). Ser850 and Ser869 each carry phosphoserine. The disordered stretch occupies residues 862 to 881; the sequence is SSMSRAQSPPVPARKNQLRA. Residues 874–911 are a coiled coil; sequence ARKNQLRAEEEKKNVIMELSEMRKQLRSEERRLQGRLL. Ser915 is modified (phosphoserine). Residues 993–1014 are a coiled coil; it reads QQQALLREQQKRLNRIKMRRDA. Disordered stretches follow at residues 1086–1105, 1124–1169, and 1182–1205; these read GLDF…SLKS, RLTE…RPGT, and NEEQ…AAHA. Residues 1124–1134 show a composition bias toward basic and acidic residues; sequence RLTEQQKKPTN. The segment covering 1135–1145 has biased composition (acidic residues); the sequence is TDDEGSLVDPD. Over residues 1146–1156 the composition is skewed to basic and acidic residues; the sequence is DIMRHLSDDGR.

As to quaternary structure, interacts with PLEKHG6. Interacts with ARMC9, TOGARAM1, CCDC66, CEP104 and CEP290. Post-translationally, phosphorylated. Phosphorylation increases in colcemide-treated cells.

It is found in the cytoplasm. The protein localises to the cytoskeleton. It localises to the microtubule organizing center. Its subcellular location is the centrosome. The protein resides in the spindle. It is found in the spindle pole. The protein localises to the cell projection. It localises to the cilium. In terms of biological role, may play a role in cell-cycle-dependent microtubule organization. The protein is Centrosome and spindle pole associated protein 1 (Cspp1) of Mus musculus (Mouse).